The sequence spans 817 residues: Verprolin (817 aa).

The span at 1 to 15 shows a compositional bias: pro residues; the sequence is MAGAPAPPPPPPPPA. Residues 1-752 are disordered; it reads MAGAPAPPPP…THTNQPDVDV (752 aa). In terms of domain architecture, WH2 1 spans 30 to 47; sequence GRDALLGDIRKGMKLKKA. The span at 37–51 shows a compositional bias: basic and acidic residues; sequence DIRKGMKLKKAETND. The segment covering 62–79 has biased composition (low complexity); the sequence is VSSASGSSGTVSSKGPSM. One can recognise a WH2 2 domain in the interval 87-106; it reads MGAPQLGDILAGGIPKLKHI. N-linked (GlcNAc...) asparagine glycosylation is present at Asn109. Positions 119–180 are enriched in pro residues; the sequence is SAPPIPGAVP…VPSSPAPPLP (62 aa). Asn212 carries N-linked (GlcNAc...) asparagine glycosylation. The segment covering 236–245 has biased composition (pro residues); sequence PQAPPPPPTP. A compositionally biased stretch (polar residues) spans 254-265; sequence IKPTDNAVSPPS. Positions 306–335 are enriched in pro residues; sequence SQPPLPSSAPPIPTSHAPPLPPTAPPPPSL. Positions 336 to 348 are enriched in low complexity; sequence PNVTSAPKKATSA. Asn337 is a glycosylation site (N-linked (GlcNAc...) asparagine). Residues 372-382 are compositionally biased toward pro residues; sequence PVPPTLAPPLP. Asn383 is a glycosylation site (N-linked (GlcNAc...) asparagine). The span at 383–395 shows a compositional bias: low complexity; it reads NTTSVPPNKASSM. Residues 396–407 are compositionally biased toward pro residues; it reads PAPPPPPPPPPG. Positions 408-422 are enriched in low complexity; the sequence is AFSTSSALSASSIPL. Over residues 423-432 the composition is skewed to pro residues; the sequence is APLPPPPPPS. The segment covering 447–469 has biased composition (low complexity); sequence LTTNKPSASSKQSKISSSSSSSA. Basic and acidic residues predominate over residues 502–516; it reads DKQEDVIGSSKDDNV. Residues 518 to 534 show a composition bias toward low complexity; the sequence is PSPISPSINPPKQSSQN. Ser519 carries the post-translational modification Phosphoserine. Residues 557–579 show a composition bias toward pro residues; the sequence is APPPHTDAMAPPLPPSAPPPPIT. Positions 588–597 are enriched in basic and acidic residues; it reads GDDHTNDKSE. The span at 649 to 661 shows a compositional bias: pro residues; sequence PPSPPVAAAPPLP. Residues 713–737 show a composition bias toward polar residues; that stretch reads MDTGTSNSPSKNLKQRLFSTGGSTL. A Phosphoserine modification is found at Ser762. 2 N-linked (GlcNAc...) asparagine glycosylation sites follow: Asn784 and Asn796. The tract at residues 786–806 is disordered; that stretch reads SQMPKPRPFQNKTKLYPSGKG.

The protein belongs to the verprolin family. Post-translationally, N-glycosylated.

The protein localises to the cytoplasm. It is found in the cytoskeleton. Functionally, involved in cytoskeletal organization and cellular growth. May exert its effects on the cytoskeleton directly, or indirectly via proline-binding proteins (e.g. profilin) or proteins possessing SH3 domains. The polypeptide is Verprolin (VRP1) (Saccharomyces cerevisiae (strain ATCC 204508 / S288c) (Baker's yeast)).